A 477-amino-acid chain; its full sequence is Ribulose bisphosphate carboxylase large chain (477 aa).

Residues 1–2 (MS) constitute a propeptide that is removed on maturation. An N-acetylproline modification is found at P3. At K14 the chain carries N6,N6,N6-trimethyllysine. Substrate is bound at residue T173. K175 acts as the Proton acceptor in catalysis. Residue K177 coordinates substrate. Residues K201, D203, and E204 each contribute to the Mg(2+) site. K201 carries the N6-carboxylysine modification. Catalysis depends on H294, which acts as the Proton acceptor. Positions 295, 327, and 379 each coordinate substrate.

The protein belongs to the RuBisCO large chain family. Type I subfamily. As to quaternary structure, heterohexadecamer of 8 large chains and 8 small chains; disulfide-linked. The disulfide link is formed within the large subunit homodimers. Mg(2+) serves as cofactor. Post-translationally, the disulfide bond which can form in the large chain dimeric partners within the hexadecamer appears to be associated with oxidative stress and protein turnover.

It is found in the plastid. The protein resides in the chloroplast. It catalyses the reaction 2 (2R)-3-phosphoglycerate + 2 H(+) = D-ribulose 1,5-bisphosphate + CO2 + H2O. The enzyme catalyses D-ribulose 1,5-bisphosphate + O2 = 2-phosphoglycolate + (2R)-3-phosphoglycerate + 2 H(+). Functionally, ruBisCO catalyzes two reactions: the carboxylation of D-ribulose 1,5-bisphosphate, the primary event in carbon dioxide fixation, as well as the oxidative fragmentation of the pentose substrate in the photorespiration process. Both reactions occur simultaneously and in competition at the same active site. The chain is Ribulose bisphosphate carboxylase large chain from Gerbera jamesonii (Transvaal daisy).